Here is a 366-residue protein sequence, read N- to C-terminus: Isocitrate dehydrogenase [NAD] subunit alpha, mitochondrial (366 aa).

Residues 1–27 (MAGSAWVSKVSRLLGAFHNTKQVTRGF) constitute a mitochondrion transit peptide. K77 carries the post-translational modification N6-succinyllysine. T101 carries the phosphothreonine modification. Residues R115, R125, and R146 each coordinate substrate. K223 bears the N6-acetyllysine mark. Mg(2+) contacts are provided by D233, D257, and D261. N6-acetyllysine; alternate is present on K343. K343 is modified (N6-succinyllysine; alternate). N6-succinyllysine is present on K350.

The protein belongs to the isocitrate and isopropylmalate dehydrogenases family. As to quaternary structure, heterooligomer of subunits alpha (IDH3A), beta (IDH3B), and gamma (IDH3G) in the apparent ratio of 2:1:1. The heterodimer containing one IDH3A and one IDH3B subunit and the heterodimer containing one IDH3A and one IDH3G subunit assemble into a heterotetramer (which contains two subunits of IDH3A, one of IDH3B and one of IDH3G) and further into the heterooctamer. Mg(2+) is required as a cofactor. Requires Mn(2+) as cofactor. Expressed in brown adipose tissue (BAT).

It is found in the mitochondrion. It carries out the reaction D-threo-isocitrate + NAD(+) = 2-oxoglutarate + CO2 + NADH. With respect to regulation, the heterotetramer and the heterodimer composed of IDH3A and IDH3G subunits can be allosterically activated by citrate (CIT) or/and ADP, and the two activators can act independently or synergistically. The heterodimer composed of IDH3A and IDH3B subunits cannot be allosterically regulated and the allosteric regulation of the heterotetramer is through the IDH3G subunit and not the IDH3B subunit. The IDH3G subunit contains the allosteric site which consists of a CIT-binding site and an ADP-binding site, and the binding of CIT and ADP causes conformational changes at the allosteric site which are transmitted to the active site in the catalytic subunit (IDH3A) through a cascade of conformational changes at the heterodimer interface, leading to stabilization of the isocitrate-binding at the active site and thus activation of the enzyme. ATP can activate the heterotetramer and the heterodimer composed of IDH3A and IDH3G subunits at low concentrations but inhibits their activities at high concentrations, whereas ATP exhibits only inhibitory effect on the heterodimer composed of IDH3A and IDH3B subunits. Catalytic subunit of the enzyme which catalyzes the decarboxylation of isocitrate (ICT) into alpha-ketoglutarate. The heterodimer composed of the alpha (IDH3A) and beta (IDH3B) subunits and the heterodimer composed of the alpha (IDH3A) and gamma (IDH3G) subunits, have considerable basal activity but the full activity of the heterotetramer (containing two subunits of IDH3A, one of IDH3B and one of IDH3G) requires the assembly and cooperative function of both heterodimers. In Rattus norvegicus (Rat), this protein is Isocitrate dehydrogenase [NAD] subunit alpha, mitochondrial.